Here is a 291-residue protein sequence, read N- to C-terminus: Flavin-dependent thymidylate synthase (291 aa).

The 211-residue stretch at 31-241 folds into the ThyX domain; sequence GFVRVVDYMG…PMVHAAFVEY (211 aa). FAD is bound by residues Ser77, 100–102, and Glu108; that span reads RHR. DUMP contacts are provided by residues 97 to 100, 108 to 112, and Arg180; these read QWVR and EYSAR. The ThyX motif signature appears at 100–110; it reads RHRTASINEYS. Residue 196–198 participates in FAD binding; sequence NLH. Arg207 is a dUMP binding site. The active-site Involved in ionization of N3 of dUMP, leading to its activation is the Arg207.

It belongs to the thymidylate synthase ThyX family. Homotetramer. It depends on FAD as a cofactor.

It catalyses the reaction dUMP + (6R)-5,10-methylene-5,6,7,8-tetrahydrofolate + NADPH + H(+) = dTMP + (6S)-5,6,7,8-tetrahydrofolate + NADP(+). It participates in pyrimidine metabolism; dTTP biosynthesis. Functionally, catalyzes the reductive methylation of 2'-deoxyuridine-5'-monophosphate (dUMP) to 2'-deoxythymidine-5'-monophosphate (dTMP) while utilizing 5,10-methylenetetrahydrofolate (mTHF) as the methyl donor, and NADPH and FADH(2) as the reductant. In Anaplasma marginale (strain St. Maries), this protein is Flavin-dependent thymidylate synthase.